The chain runs to 177 residues: Probable inosine/xanthosine triphosphatase (177 aa).

The protein belongs to the YjjX NTPase family. In terms of assembly, homodimer. The cofactor is Mg(2+). Mn(2+) is required as a cofactor.

The catalysed reaction is XTP + H2O = XDP + phosphate + H(+). It catalyses the reaction ITP + H2O = IDP + phosphate + H(+). Functionally, phosphatase that hydrolyzes non-canonical purine nucleotides such as XTP and ITP to their respective diphosphate derivatives. Probably excludes non-canonical purines from DNA/RNA precursor pool, thus preventing their incorporation into DNA/RNA and avoiding chromosomal lesions. The chain is Probable inosine/xanthosine triphosphatase from Halalkalibacterium halodurans (strain ATCC BAA-125 / DSM 18197 / FERM 7344 / JCM 9153 / C-125) (Bacillus halodurans).